Reading from the N-terminus, the 221-residue chain is Large ribosomal subunit protein uL3 (221 aa).

The disordered stretch occupies residues 123 to 156 (GFAGSIKRHNQSRGPESHGSRYHRRPGSMGPIKG).

This sequence belongs to the universal ribosomal protein uL3 family. Part of the 50S ribosomal subunit. Forms a cluster with proteins L14 and L19.

In terms of biological role, one of the primary rRNA binding proteins, it binds directly near the 3'-end of the 23S rRNA, where it nucleates assembly of the 50S subunit. The protein is Large ribosomal subunit protein uL3 of Aster yellows witches'-broom phytoplasma (strain AYWB).